The primary structure comprises 256 residues: Expansin-like B1 (256 aa).

The signal sequence occupies residues 1–24; that stretch reads MAQLLRRHLPVILSLILFLSKATA. N-linked (GlcNAc...) asparagine glycosylation occurs at Asn-27. The Expansin-like EG45 domain maps to 46–150; that stretch reads NGACEYGAFG…RRVSCTYPNK (105 aa). The 86-residue stretch at 164 to 249 folds into the Expansin-like CBD domain; it reads NYLEFEIWYQ…NWTAGATYDS (86 aa). N-linked (GlcNAc...) asparagine glycosylation is found at Asn-189 and Asn-240.

This sequence belongs to the expansin family. Expansin-like B subfamily.

The protein resides in the secreted. This chain is Expansin-like B1 (EXLB1), found in Oryza sativa subsp. japonica (Rice).